A 140-amino-acid polypeptide reads, in one-letter code: uncharacterized protein (140 aa).

4 helical membrane-spanning segments follow: residues 4 to 24 (LLLA…SFSG), 56 to 76 (EAFI…YLLW), 84 to 104 (SAAA…LFFS), and 109 to 129 (IRDV…YVLA).

It is found in the cell membrane. Its function is as follows. May be important for peptidoglycan remodeling. This is an uncharacterized protein from Bacillus subtilis (strain 168).